The chain runs to 1791 residues: Protein TIC 214 (1791 aa).

The next 6 helical transmembrane spans lie at 19-39 (IINSVVVVGLYYGFLTTFSIG), 68-88 (FIAGQLMMFISIYYAPLHLAL), 91-111 (PHTITVLALPYLLFHFFWNNH), 133-153 (VFLNNLIFQLFNHFILPSSML), 176-196 (VGWLIGHILFMKWVGLVLVWI), and 230-250 (IFSILLFITCVYYLGRIPSPI). The span at 257 to 271 (GTSETEERGGTKQDQ) shows a compositional bias: basic and acidic residues. Disordered regions lie at residues 257-278 (GTSETEERGGTKQDQEVSTEEA) and 1498-1521 (ADQGELESDNEKQRNPELALPNQE).

It belongs to the TIC214 family. In terms of assembly, part of the Tic complex.

The protein localises to the plastid. The protein resides in the chloroplast inner membrane. Its function is as follows. Involved in protein precursor import into chloroplasts. May be part of an intermediate translocation complex acting as a protein-conducting channel at the inner envelope. The polypeptide is Protein TIC 214 (Aethionema grandiflorum (Persian stone-cress)).